The chain runs to 460 residues: Flavin-containing monooxygenase FMO GS-OX-like 9 (460 aa).

20 to 25 provides a ligand contact to FAD; it reads GAGPAG. 222-227 is a binding site for NADP(+); that stretch reads GNSMSG.

It belongs to the FMO family. The cofactor is FAD.

Catalyzes the conversion of methylthioalkyl glucosinolates of any chain length into methylsulfinylalkyl glucosinolates. This is Flavin-containing monooxygenase FMO GS-OX-like 9 from Arabidopsis thaliana (Mouse-ear cress).